Here is a 56-residue protein sequence, read N- to C-terminus: Protein translocase subunit SecE (56 aa).

A helical transmembrane segment spans residues 30-50 (VFWLVLFVSIFLGIVDYLMFL).

This sequence belongs to the SecE/SEC61-gamma family. In terms of assembly, component of the Sec protein translocase complex. Heterotrimer consisting of SecY, SecE and SecG subunits. The heterotrimers can form oligomers, although 1 heterotrimer is thought to be able to translocate proteins. Interacts with the ribosome. Interacts with SecDF, and other proteins may be involved. Interacts with SecA.

The protein resides in the cell inner membrane. Functionally, essential subunit of the Sec protein translocation channel SecYEG. Clamps together the 2 halves of SecY. May contact the channel plug during translocation. The chain is Protein translocase subunit SecE from Borreliella burgdorferi (strain ATCC 35210 / DSM 4680 / CIP 102532 / B31) (Borrelia burgdorferi).